The sequence spans 134 residues: Z-ring associated protein G (134 aa).

A helical transmembrane segment spans residues Glu7–Val27. The tract at residues Ala107 to Asn134 is disordered. Over residues Ser111–Ser120 the composition is skewed to basic and acidic residues.

It belongs to the ZapG family.

The protein resides in the cell inner membrane. In terms of biological role, involved in cell division, cell envelope biogenesis and cell shape maintenance. The protein is Z-ring associated protein G of Haemophilus influenzae (strain ATCC 51907 / DSM 11121 / KW20 / Rd).